A 556-amino-acid polypeptide reads, in one-letter code: Testis-specific protein 10-interacting protein (556 aa).

A compositionally biased stretch (polar residues) spans 1–16; it reads MGQDTDMLNTYQQLVR. 4 disordered regions span residues 1–31, 50–102, 123–155, and 179–309; these read MGQD…LQAP, GCLG…LLPR, LQPS…ANLP, and GGVS…QWRK. A compositionally biased stretch (polar residues) spans 208–219; sequence GSASDKQVQLQS. The span at 244-258 shows a compositional bias: acidic residues; the sequence is SEEEQFSEATEEAEE. A compositionally biased stretch (polar residues) spans 289–301; it reads QGQSQGSSPSFNN. Residues 379–464 are a coiled coil; sequence RQEATRSLLQ…LQGIQHRVQA (86 aa). The tract at residues 503-556 is disordered; the sequence is AGKVDREGTPRKPRSHRSMGVRMEHSPQRPPRTEPTGSQPDRHYNPSLDPECSP.

The chain is Testis-specific protein 10-interacting protein (TSGA10IP) from Homo sapiens (Human).